A 451-amino-acid chain; its full sequence is SH2 domain-containing protein 7 (451 aa).

The 92-residue stretch at 51–142 folds into the SH2 domain; that stretch reads WFHGFITRKQ…PFKEMLTAAC (92 aa). Disordered regions lie at residues 180–232, 256–321, and 408–436; these read KAAS…SLLE, LGTE…SDAM, and GTPE…THKP. The segment covering 221-232 has biased composition (low complexity); that stretch reads SPLPEKSSSLLE. The segment covering 279 to 291 has biased composition (basic and acidic residues); the sequence is EAQRRLSDGEQNR. Residues 306–316 are compositionally biased toward polar residues; it reads QGPTESPTSWG. A compositionally biased stretch (basic and acidic residues) spans 426–436; it reads KSKETGRTHKP.

The sequence is that of SH2 domain-containing protein 7 (SH2D7) from Homo sapiens (Human).